Here is a 254-residue protein sequence, read N- to C-terminus: Small ribosomal subunit protein uS2 (254 aa).

The protein belongs to the universal ribosomal protein uS2 family.

The polypeptide is Small ribosomal subunit protein uS2 (Borrelia duttonii (strain Ly)).